Reading from the N-terminus, the 189-residue chain is GTP cyclohydrolase 1 (189 aa).

Zn(2+) contacts are provided by Cys78, His81, and Cys150.

The protein belongs to the GTP cyclohydrolase I family. As to quaternary structure, homomer.

The catalysed reaction is GTP + H2O = 7,8-dihydroneopterin 3'-triphosphate + formate + H(+). It functions in the pathway cofactor biosynthesis; 7,8-dihydroneopterin triphosphate biosynthesis; 7,8-dihydroneopterin triphosphate from GTP: step 1/1. The polypeptide is GTP cyclohydrolase 1 (Bacillus anthracis (strain A0248)).